Here is a 674-residue protein sequence, read N- to C-terminus: MLPQTALLLLMSLNLVHGVFYTERYQTPTGIKGPPSNTKTQFFIPYAIKGKGVSLRGEQGIPGPPGPAGPRGHPGPSGPPGKPGTGSPGPQGQPGLPGPPGPSATGKPGLPGLPGKQGERGLNGPKGDIGPAGLPGPRGPPGPPGIPGPAGISVPGKPGPQGPTGEPGPRGFPGEKGTSGVPGLNGQKGEMGHCTPCRPGERGLPGPQGPTGPPGPPGVGKRGENGLPGQPGLKGDQGVPGERGAAGPSGPQGPPGEQGPEGIGKPGAPGIPGQPGIPGMKGQPGAPGTAGLPGAPGFGKPGLPGLKGQRGPVGLPGSPGAKGEQGPAGHPGEAGLPGPSGNMGPQGPKGIPGNPGLPGPKGEMGPVGPAGNPGAKGERGSSGLDGKPGYPGEPGLNGPKGNPGLPGPKGDPGIAGSPGLPGPVGPAGAKGVPGHNGEAGPRGVPGIPGTRGPIGPPGIPGFPGSKGDVGTPGPPGPAGIAVKGLNGPTGPPGPPGPRGNAGEPGLPGPPGPPGPPGQVALPEDFVKAGQRPFVSANQGVTGMPVSAFTVILSKAYPAIGTPIPFDKILYNKQQHYDPRTGIFTCKIPGIYYFSYHIHVKGTHAWVGLYKNGTPVMYTYDEYIKGYLDQASGSAVIDLTENDQVWLQLPNAGSNGLYSPEYVHSSFSGFLVAPM.

The N-terminal stretch at 1-18 (MLPQTALLLLMSLNLVHG) is a signal peptide. Positions 19 to 56 (VFYTERYQTPTGIKGPPSNTKTQFFIPYAIKGKGVSLR) are nonhelical region (NC2). Residues 54–521 (SLRGEQGIPG…PPGPPGQVAL (468 aa)) are disordered. Residues 57–519 (GEQGIPGPPG…PGPPGPPGQV (463 aa)) form a triple-helical region region. Over residues 106-116 (GKPGLPGLPGK) the composition is skewed to low complexity. The span at 137 to 147 (PRGPPGPPGIP) shows a compositional bias: pro residues. A disulfide bridge links cysteine 194 with cysteine 197. The span at 207 to 217 (PQGPTGPPGPP) shows a compositional bias: pro residues. Low complexity-rich tracts occupy residues 277–293 (IPGM…AGLP), 303–312 (LPGLKGQRGP), 393–403 (EPGLNGPKGNP), and 441–453 (PRGV…TRGP). Proline 460 and proline 463 each carry 4-hydroxyproline. Pro residues predominate over residues 506-516 (LPGPPGPPGPP). Residues 520–674 (ALPEDFVKAG…SFSGFLVAPM (155 aa)) form a nonhelical region (NC1) region. The C1q domain maps to 541–674 (TGMPVSAFTV…SFSGFLVAPM (134 aa)). Aspartate 620, glutamate 621, leucine 627, and aspartate 628 together coordinate Ca(2+).

In terms of assembly, homotrimer. In terms of processing, hydroxylation on proline residues within the sequence motif, GXPG, is most likely to be 4-hydroxy as this fits the requirement for 4-hydroxylation in vertebrates.

It localises to the secreted. Its subcellular location is the extracellular space. It is found in the extracellular matrix. Functionally, type X collagen is a product of hypertrophic chondrocytes and has been localized to presumptive mineralization zones of hyaline cartilage. The sequence is that of Collagen alpha-1(X) chain (COL10A1) from Bos taurus (Bovine).